We begin with the raw amino-acid sequence, 291 residues long: Diaminopimelate epimerase (291 aa).

Substrate is bound by residues asparagine 13, glutamine 46, and asparagine 66. The Proton donor role is filled by cysteine 75. Substrate-binding positions include 76–77, asparagine 170, asparagine 203, and 221–222; these read GN and ER. The active-site Proton acceptor is the cysteine 230. Position 231-232 (231-232) interacts with substrate; it reads GS.

The protein belongs to the diaminopimelate epimerase family. In terms of assembly, homodimer.

It is found in the cytoplasm. It carries out the reaction (2S,6S)-2,6-diaminopimelate = meso-2,6-diaminopimelate. It functions in the pathway amino-acid biosynthesis; L-lysine biosynthesis via DAP pathway; DL-2,6-diaminopimelate from LL-2,6-diaminopimelate: step 1/1. Catalyzes the stereoinversion of LL-2,6-diaminopimelate (L,L-DAP) to meso-diaminopimelate (meso-DAP), a precursor of L-lysine and an essential component of the bacterial peptidoglycan. This is Diaminopimelate epimerase from Albidiferax ferrireducens (strain ATCC BAA-621 / DSM 15236 / T118) (Rhodoferax ferrireducens).